Reading from the N-terminus, the 97-residue chain is SAGA-associated factor 11 (97 aa).

The segment at 70–91 (IECNVCGREVSGNRFAAHLVRC) adopts an SGF11-type zinc-finger fold.

The protein belongs to the SGF11 family. Component of the 1.8 MDa SAGA transcription coactivator-HAT complex. SAGA is built of 5 distinct domains with specialized functions. Within the SAGA complex, SUS1, SGF11, SGF73 and UBP8 form an additional subcomplex of SAGA called the DUB module (deubiquitination module). Interacts directly with SGF73, SUS1 and UBP8.

Its subcellular location is the nucleus. Its function is as follows. Functions as a component of the transcription regulatory histone acetylation (HAT) complex SAGA. At the promoters, SAGA is required for recruitment of the basal transcription machinery. It influences RNA polymerase II transcriptional activity through different activities such as TBP interaction and promoter selectivity, interaction with transcription activators, and chromatin modification through histone acetylation and deubiquitination. SAGA acetylates nucleosomal histone H3 to some extent (to form H3K9ac, H3K14ac, H3K18ac and H3K23ac). SAGA interacts with DNA via upstream activating sequences (UASs). Involved in transcriptional regulation of a subset of SAGA-regulated genes. Within the SAGA complex, participates in a subcomplex, that specifically deubiquitinates histones H2B. This Kluyveromyces lactis (strain ATCC 8585 / CBS 2359 / DSM 70799 / NBRC 1267 / NRRL Y-1140 / WM37) (Yeast) protein is SAGA-associated factor 11.